We begin with the raw amino-acid sequence, 313 residues long: Ribosomal RNA small subunit methyltransferase H (313 aa).

Residues 35-37 (GGH), aspartate 55, phenylalanine 79, aspartate 100, and glutamine 107 each bind S-adenosyl-L-methionine.

The protein belongs to the methyltransferase superfamily. RsmH family.

The protein localises to the cytoplasm. The catalysed reaction is cytidine(1402) in 16S rRNA + S-adenosyl-L-methionine = N(4)-methylcytidine(1402) in 16S rRNA + S-adenosyl-L-homocysteine + H(+). Its function is as follows. Specifically methylates the N4 position of cytidine in position 1402 (C1402) of 16S rRNA. This Burkholderia ambifaria (strain MC40-6) protein is Ribosomal RNA small subunit methyltransferase H.